Consider the following 439-residue polypeptide: General transcription factor IIE subunit 1 (439 aa).

Residue alanine 2 is modified to N-acetylalanine. The HTH TFE/IIEalpha-type domain occupies leucine 14 to lysine 104. Lysine 67 carries the post-translational modification N6-acetyllysine. Zn(2+) contacts are provided by cysteine 129, cysteine 132, cysteine 154, and cysteine 157. The segment at cysteine 129 to cysteine 157 adopts a C4-type zinc-finger fold. A Phosphoserine modification is found at serine 268. The span at serine 333–alanine 344 shows a compositional bias: low complexity. Residues serine 333–aspartate 392 form a disordered region. 2 stretches are compositionally biased toward acidic residues: residues serine 354–aspartate 364 and glutamate 379–aspartate 392.

The protein belongs to the TFIIE alpha subunit family. As to quaternary structure, tetramer of two alpha and two beta chains. Interacts with TAF6/TAFII80. Interacts with ATF7IP. Interacts with SND1. Part of TBP-based Pol II pre-initiation complex (PIC), in which Pol II core assembles with general transcription factors and other specific initiation factors including GTF2E1, GTF2E2, GTF2F1, GTF2F2, TCEA1, ERCC2, ERCC3, GTF2H2, GTF2H3, GTF2H4, GTF2H5, GTF2A1, GTF2A2, GTF2B and TBP; this large multi-subunit PIC complex mediates DNA unwinding and targets Pol II core to the transcription start site where the first phosphodiester bond forms.

The protein localises to the nucleus. Recruits TFIIH to the initiation complex and stimulates the RNA polymerase II C-terminal domain kinase and DNA-dependent ATPase activities of TFIIH. Both TFIIH and TFIIE are required for promoter clearance by RNA polymerase. The polypeptide is General transcription factor IIE subunit 1 (GTF2E1) (Pongo abelii (Sumatran orangutan)).